Consider the following 808-residue polypeptide: Probable inorganic carbon transporter subunit DabA (808 aa).

The Zn(2+) site is built by Cys-334, Asp-336, His-494, and Cys-509.

It belongs to the inorganic carbon transporter (TC 9.A.2) DabA family. Forms a complex with DabB. Zn(2+) is required as a cofactor.

Its subcellular location is the cell inner membrane. Its function is as follows. Part of an energy-coupled inorganic carbon pump. The sequence is that of Probable inorganic carbon transporter subunit DabA from Rhodopseudomonas palustris (strain BisB5).